Here is a 329-residue protein sequence, read N- to C-terminus: Coiled-coil domain-containing protein 54 (329 aa).

Residues 86-149 are a coiled coil; sequence NIVSSISNIQ…VTELESQNSY (64 aa). Positions 178–191 are enriched in polar residues; that stretch reads TPKGTATSPDTVIS. Positions 178–214 are disordered; sequence TPKGTATSPDTVISSAEPERVSSYPEPTGELKKKTTS. Phosphothreonine is present on T182.

This Mus musculus (Mouse) protein is Coiled-coil domain-containing protein 54 (Ccdc54).